Here is a 690-residue protein sequence, read N- to C-terminus: Proprotein convertase subtilisin/kexin type 9 (690 aa).

Positions 1–28 (MGTVSSRRSWWPLPLLLLLLLGPAGARA) are cleaved as a signal peptide. A propeptide spanning residues 29 to 150 (QEDEDGDYEE…IEEDSSVFAQ (122 aa)) is cleaved from the precursor. A Sulfotyrosine modification is found at tyrosine 36. The residue at position 45 (serine 45) is a Phosphoserine. The Inhibitor I9 domain occupies 75–147 (TYVVVLKEET…VDYIEEDSSV (73 aa)). The region spanning 153–459 (PWNLERITPP…GWQLFCRTVW (307 aa)) is the Peptidase S8 domain. Active-site charge relay system residues include aspartate 184 and histidine 224. 2 disulfide bridges follow: cysteine 221–cysteine 253 and cysteine 321–cysteine 356. Serine 384 functions as the Charge relay system in the catalytic mechanism. The interval 448-690 (GAGWQLFCRT…HLAQASQELQ (243 aa)) is C-terminal domain. Cystine bridges form between cysteine 455/cysteine 525, cysteine 475/cysteine 524, and cysteine 484/cysteine 507. Asparagine 531 carries an N-linked (GlcNAc...) asparagine glycan. 6 disulfides stabilise this stretch: cysteine 532/cysteine 599, cysteine 550/cysteine 598, cysteine 560/cysteine 586, cysteine 606/cysteine 677, cysteine 624/cysteine 676, and cysteine 633/cysteine 652. Serine 686 is modified (phosphoserine).

The protein belongs to the peptidase S8 family. In terms of assembly, monomer. Can self-associate to form dimers and higher multimers which may have increased LDLR degrading activity. The precursor protein but not the mature protein may form multimers. Interacts with APOB, VLDLR, LRP8/APOER2 and BACE1. The full-length immature form (pro-PCSK9) interacts with SCNN1A, SCNN1B and SCNN1G. The pro-PCSK9 form (via C-terminal domain) interacts with LDLR. Interacts (via the C-terminal domain) with ANXA2 (via repeat Annexin 1); the interaction inhibits the degradation of LDLR. Ca(2+) is required as a cofactor. In terms of processing, cleavage by furin and PCSK5 generates a truncated inactive protein that is unable to induce LDLR degradation. Post-translationally, undergoes autocatalytic cleavage in the endoplasmic reticulum to release the propeptide from the N-terminus and the cleavage of the propeptide is strictly required for its maturation and activation. The cleaved propeptide however remains associated with the catalytic domain through non-covalent interactions, preventing potential substrates from accessing its active site. As a result, it is secreted from cells as a propeptide-containing, enzymatically inactive protein. Phosphorylation protects the propeptide against proteolysis.

The protein localises to the cytoplasm. It is found in the secreted. It localises to the endosome. The protein resides in the lysosome. Its subcellular location is the cell surface. The protein localises to the endoplasmic reticulum. It is found in the golgi apparatus. With respect to regulation, its proteolytic activity is autoinhibited by the non-covalent binding of the propeptide to the catalytic domain. Inhibited by EGTA. Its function is as follows. Crucial player in the regulation of plasma cholesterol homeostasis. Binds to low-density lipid receptor family members: low density lipoprotein receptor (LDLR), very low density lipoprotein receptor (VLDLR), apolipoprotein E receptor (LRP1/APOER) and apolipoprotein receptor 2 (LRP8/APOER2), and promotes their degradation in intracellular acidic compartments. Acts via a non-proteolytic mechanism to enhance the degradation of the hepatic LDLR through a clathrin LDLRAP1/ARH-mediated pathway. May prevent the recycling of LDLR from endosomes to the cell surface or direct it to lysosomes for degradation. Can induce ubiquitination of LDLR leading to its subsequent degradation. Inhibits intracellular degradation of APOB via the autophagosome/lysosome pathway in a LDLR-independent manner. Involved in the disposal of non-acetylated intermediates of BACE1 in the early secretory pathway. Inhibits epithelial Na(+) channel (ENaC)-mediated Na(+) absorption by reducing ENaC surface expression primarily by increasing its proteasomal degradation. Regulates neuronal apoptosis via modulation of LRP8/APOER2 levels and related anti-apoptotic signaling pathways. The chain is Proprotein convertase subtilisin/kexin type 9 (PCSK9) from Pongo pygmaeus (Bornean orangutan).